The chain runs to 136 residues: Crossover junction endodeoxyribonuclease Hjc (136 aa).

E9 lines the Mg(2+) pocket. S29 is a catalytic residue. Mg(2+) contacts are provided by D38 and E51.

The protein belongs to the Holliday junction resolvase Hjc family. Homodimer. Requires Mg(2+) as cofactor.

It catalyses the reaction Endonucleolytic cleavage at a junction such as a reciprocal single-stranded crossover between two homologous DNA duplexes (Holliday junction).. A structure-specific endonuclease that resolves Holliday junction (HJ) intermediates during genetic recombination. Cleaves 4-way DNA junctions introducing paired nicks in opposing strands, leaving a 5'-terminal phosphate and a 3'-terminal hydroxyl group that are subsequently ligated to produce recombinant products. This Archaeoglobus fulgidus (strain ATCC 49558 / DSM 4304 / JCM 9628 / NBRC 100126 / VC-16) protein is Crossover junction endodeoxyribonuclease Hjc.